Consider the following 661-residue polypeptide: Chermesin D/asnovolin J monooxidase nvfH (661 aa).

The N-linked (GlcNAc...) asparagine glycan is linked to asparagine 12. The chain crosses the membrane as a helical span at residues 89–111 (VLIIGAGYGGLLFAVRIIQTGAF). Residues 128–131 (TWYW), 140–141 (DV), and tyrosine 146 each bind FAD. NADP(+) is bound at residue 138 to 140 (MCD). NADP(+) contacts are provided by residues 286 to 292 (TGATAIQ) and 309 to 310 (RT). N-linked (GlcNAc...) asparagine glycans are attached at residues asparagine 382 and asparagine 538.

Belongs to the FAD-binding monooxygenase family. FAD serves as cofactor.

The protein resides in the membrane. It carries out the reaction chermesin D + AH2 + O2 = asnovolin I + A + H2O. It catalyses the reaction asnovolin J + AH2 + O2 = asnovolin A + A + H2O. Its pathway is secondary metabolite biosynthesis; terpenoid biosynthesis. Functionally, chermesin D/asnovolin J monooxidase; part of the gene cluster that mediates the biosynthesis of novofumigatonin, a heavily oxygenated meroterpenoid containing a unique orthoester moiety. The first step of the pathway is the synthesis of 3,5-dimethylorsellinic acid (DMOA) by the polyketide synthase nvfA via condensation of one acetyl-CoA starter unit with 3 malonyl-CoA units and 2 methylations. DMOA is then converted to farnesyl-DMOA by the farnesyltransferase nvfB. Epoxydation by FAD-dependent monooxygenase nvfK, followed by a protonation-initiated cyclization catalyzed by the terpene cyclase nvfL leads to the production of asnavolin H. The short chain dehydrogenase nvfC then as a 3-OH dehydrogenase of asnovolin H to yield chemesin D. There are two branches to synthesize asnovolin A from chemesin D. In one branch, chemesin D undergoes Baeyer-Villiger oxidation by nvfH, methylation by nvfJ, and enoyl reduction by the nvfM D enoylreductase that reduces the double bond between C-5'and C-6', to form respectively asnovolin I, asnovolin K, and asnovolin A. In the other branch, the methylation precedes the Baeyer-Villiger oxidation and the enoyl reduction to yield asnovolin A via the asnovolin J intermediate. Asnovolin A is further converted to fumigatonoid A by the Fe(II)/2-oxoglutarate-dependent dioxygenase nvfI that catalyzes an endoperoxidation reaction. The alpha/beta hydrolase nvfD then acts as an epimerase that converts fumigatonoid A to its C-5' epimer, which then undergoes spontaneous or nvfD-catalyzed lactonization. The following step utilizes the ketoreductase nvfG to produce fumigatonoid B. The dioxygenase nvfE further converts fumigatonoid B into fumigatonoid C. Finally the Fe(II)/2-oxoglutarate-dependent dioxygenase nvfF catalyzes two rounds of oxidation to transform fumigatonoid C into the end product, novofumigatonin A. This is Chermesin D/asnovolin J monooxidase nvfH from Aspergillus novofumigatus (strain IBT 16806).